Here is a 248-residue protein sequence, read N- to C-terminus: Probable transcriptional regulatory protein Avi_3631 (248 aa).

Belongs to the TACO1 family.

The protein localises to the cytoplasm. This is Probable transcriptional regulatory protein Avi_3631 from Allorhizobium ampelinum (strain ATCC BAA-846 / DSM 112012 / S4) (Agrobacterium vitis (strain S4)).